Reading from the N-terminus, the 639-residue chain is Chaperone protein DnaK (639 aa).

Thr196 bears the Phosphothreonine; by autocatalysis mark. A disordered region spans residues 592–639 (ASSLYQTPDAGAPGASGPSAGGEPETGKKGGDGEVQNAEYEVIDGNDK). Low complexity predominate over residues 601–613 (AGAPGASGPSAGG).

It belongs to the heat shock protein 70 family.

Functionally, acts as a chaperone. The polypeptide is Chaperone protein DnaK (Chlorobium limicola (strain DSM 245 / NBRC 103803 / 6330)).